The primary structure comprises 432 residues: tRNA modification GTPase MnmE (432 aa).

Residues Arg-23, Glu-85, and Lys-124 each coordinate (6S)-5-formyl-5,6,7,8-tetrahydrofolate. The TrmE-type G domain maps to 217–362 (GARLALIGAP…LKEAVREALL (146 aa)). Residue Asn-227 coordinates K(+). Residues 227-232 (NAGKSS), 246-252 (SPIPGTT), and 271-274 (DTAG) contribute to the GTP site. Ser-231 is a binding site for Mg(2+). K(+) contacts are provided by Ser-246, Ile-248, and Thr-251. Thr-252 contacts Mg(2+). Residue Lys-432 coordinates (6S)-5-formyl-5,6,7,8-tetrahydrofolate.

This sequence belongs to the TRAFAC class TrmE-Era-EngA-EngB-Septin-like GTPase superfamily. TrmE GTPase family. As to quaternary structure, homodimer. Heterotetramer of two MnmE and two MnmG subunits. K(+) is required as a cofactor.

Its subcellular location is the cytoplasm. Exhibits a very high intrinsic GTPase hydrolysis rate. Involved in the addition of a carboxymethylaminomethyl (cmnm) group at the wobble position (U34) of certain tRNAs, forming tRNA-cmnm(5)s(2)U34. This Thermus thermophilus (strain ATCC 27634 / DSM 579 / HB8) protein is tRNA modification GTPase MnmE.